Reading from the N-terminus, the 488-residue chain is Glutamyl-tRNA(Gln) amidotransferase subunit B, mitochondrial (488 aa).

Belongs to the GatB/GatE family. GatB subfamily. As to quaternary structure, subunit of the heterotrimeric GatFAB amidotransferase (AdT) complex, composed of A, B and F subunits.

It is found in the mitochondrion. It catalyses the reaction L-glutamyl-tRNA(Gln) + L-glutamine + ATP + H2O = L-glutaminyl-tRNA(Gln) + L-glutamate + ADP + phosphate + H(+). Its function is as follows. Allows the formation of correctly charged Gln-tRNA(Gln) through the transamidation of misacylated Glu-tRNA(Gln) in the mitochondria. The reaction takes place in the presence of glutamine and ATP through an activated gamma-phospho-Glu-tRNA(Gln). In Candida albicans (strain SC5314 / ATCC MYA-2876) (Yeast), this protein is Glutamyl-tRNA(Gln) amidotransferase subunit B, mitochondrial.